A 1112-amino-acid chain; its full sequence is Mediator of RNA polymerase II transcription subunit 14 (1112 aa).

3 disordered regions span residues 1–76, 120–141, and 1088–1112; these read MPGV…INES, SPHGQMPSTPANGKAPGDQSPE, and TNSAGARSSQQCDAPPEAADVITID. The segment covering 20-39 has biased composition (polar residues); it reads SPDNVSSTPFPQERVNQSGD. Basic and acidic residues predominate over residues 64 to 73; sequence IETHTGKDGI. A compositionally biased stretch (polar residues) spans 1088–1099; sequence TNSAGARSSQQC.

This sequence belongs to the Mediator complex subunit 14 family. Component of the Mediator complex.

It is found in the nucleus. In terms of biological role, component of the Mediator complex, a coactivator involved in the regulated transcription of nearly all RNA polymerase II-dependent genes. Mediator functions as a bridge to convey information from gene-specific regulatory proteins to the basal RNA polymerase II transcription machinery. Mediator is recruited to promoters by direct interactions with regulatory proteins and serves as a scaffold for the assembly of a functional preinitiation complex with RNA polymerase II and the general transcription factors. This is Mediator of RNA polymerase II transcription subunit 14 (rgr1) from Aspergillus clavatus (strain ATCC 1007 / CBS 513.65 / DSM 816 / NCTC 3887 / NRRL 1 / QM 1276 / 107).